We begin with the raw amino-acid sequence, 414 residues long: Ferredoxin--NAD(P)(+) reductase fdr (414 aa).

Residue 7–38 participates in FAD binding; it reads DVVIVGAGHGGAQTAIALRQNGFAGTIAIIGA. Residue 149–177 coordinates NAD(+); it reads KVVIIGGGYIGLEAAAVMAKFGKNVTLIE.

This sequence belongs to the FAD-dependent oxidoreductase family. As to quaternary structure, monomer. Carbazole 1,9a-dioxygenase complex consists of a terminal oxygenase component CarAa, a ferredoxin reductase component fdr and a ferredoxin component CarAc. The cofactor is FAD.

The catalysed reaction is 2 reduced [2Fe-2S]-[ferredoxin] + NAD(+) + H(+) = 2 oxidized [2Fe-2S]-[ferredoxin] + NADH. It carries out the reaction 2 reduced [2Fe-2S]-[ferredoxin] + NADP(+) + H(+) = 2 oxidized [2Fe-2S]-[ferredoxin] + NADPH. Functionally, part of the multicomponent carbazole 1,9a-dioxygenase (CARDO), that converts carbazole (CAR) into 2-aminobiphenyl-2,3-diol. The polypeptide is Ferredoxin--NAD(P)(+) reductase fdr (fdr) (Sphingomonas sp).